Here is a 467-residue protein sequence, read N- to C-terminus: MLTPVVSYTTVREVKGPLIVIEKTRGVSYGEVGEVIGPDGEPRRVQVIEVGTDYAVAQVLGGTLGLPAKGSTVRFYGKTLKIPVSEQLIGRILDGKGQPRDHMPLPPPEDFRDVNGEPLNPYSREYPEEPIETGISAIDGLYTLVRGQKLPIFSGTGLPHNLMAAQVVRQATVRGSEEEFAVVFVGVGIKTEEALFFMDEFRKTGALRRAVAVLNLASDPVAERILAPRVGLTIGEYLAWQLGYHVLVVITDMTNYCEGLRELSSGRGELPGRRGYPGYMYTDLATIYERAGRARGRRGSVTQFPILTMPHDDITHPIPDLTGYITEGQLVLSRAMWGKGIYPPFDVIMSLSRLAKDAIGEGKTREDHKDVANTLIAAYSKALEIRNLATLVGERNLGWRERRYLRFADAFEQRFIKQGYYERRSFEETLDIGWDVLSILPEDELTNARPQITQKFYRRHIFESVQL.

The segment at 95-114 (GKGQPRDHMPLPPPEDFRDV) is disordered.

This sequence belongs to the ATPase alpha/beta chains family. Has multiple subunits with at least A(3), B(3), C, D, E, F, H, I and proteolipid K(x).

The protein localises to the cell membrane. Component of the A-type ATP synthase that produces ATP from ADP in the presence of a proton gradient across the membrane. The B chain is a regulatory subunit. The sequence is that of A-type ATP synthase subunit B from Pyrobaculum aerophilum (strain ATCC 51768 / DSM 7523 / JCM 9630 / CIP 104966 / NBRC 100827 / IM2).